Reading from the N-terminus, the 300-residue chain is N-acetylmannosamine kinase (300 aa).

ATP-binding positions include 5–12 (ALDIGGTK) and 132–139 (GVGGGIVL). His156, Cys166, Cys168, and Cys173 together coordinate Zn(2+).

This sequence belongs to the ROK (NagC/XylR) family. NanK subfamily. As to quaternary structure, homodimer.

The catalysed reaction is an N-acyl-D-mannosamine + ATP = an N-acyl-D-mannosamine 6-phosphate + ADP + H(+). It participates in amino-sugar metabolism; N-acetylneuraminate degradation; D-fructose 6-phosphate from N-acetylneuraminate: step 2/5. In terms of biological role, catalyzes the phosphorylation of N-acetylmannosamine (ManNAc) to ManNAc-6-P. This Haemophilus influenzae (strain PittEE) protein is N-acetylmannosamine kinase.